The following is a 239-amino-acid chain: Ribonuclease PH (239 aa).

Phosphate contacts are provided by residues arginine 87 and 125–127 (GTR).

Belongs to the RNase PH family. In terms of assembly, homohexameric ring arranged as a trimer of dimers.

It catalyses the reaction tRNA(n+1) + phosphate = tRNA(n) + a ribonucleoside 5'-diphosphate. Phosphorolytic 3'-5' exoribonuclease that plays an important role in tRNA 3'-end maturation. Removes nucleotide residues following the 3'-CCA terminus of tRNAs; can also add nucleotides to the ends of RNA molecules by using nucleoside diphosphates as substrates, but this may not be physiologically important. Probably plays a role in initiation of 16S rRNA degradation (leading to ribosome degradation) during starvation. This is Ribonuclease PH from Ectopseudomonas mendocina (strain ymp) (Pseudomonas mendocina).